The primary structure comprises 926 residues: Beta-mannosidase A (926 aa).

Positions 1–21 (MHVKAETVLALLTPAPPSVVG) are cleaved as a signal peptide. N-linked (GlcNAc...) asparagine glycosylation is found at Asn40, Asn242, Asn277, Asn311, and Asn342. Catalysis depends on Glu474, which acts as the Proton donor. N-linked (GlcNAc...) asparagine glycans are attached at residues Asn532, Asn603, Asn626, Asn653, Asn733, Asn756, Asn785, Asn793, Asn819, and Asn905.

This sequence belongs to the glycosyl hydrolase 2 family. Beta-mannosidase A subfamily. In terms of assembly, homodimer.

The protein localises to the secreted. The enzyme catalyses Hydrolysis of terminal, non-reducing beta-D-mannose residues in beta-D-mannosides.. Its pathway is glycan metabolism; N-glycan degradation. Exoglycosidase that cleaves the single beta-linked mannose residue from the non-reducing end of beta-mannosidic oligosaccharides of various complexity and length. Involved in the degradation of polymeric mannan and galactomannan. The sequence is that of Beta-mannosidase A (mndA) from Aspergillus fumigatus (strain CBS 144.89 / FGSC A1163 / CEA10) (Neosartorya fumigata).